The following is a 615-amino-acid chain: Putative binding protein BRA0576/BS1330_II0571 (615 aa).

Residues 1–29 (MLNRFIAFFRSVFLIGLVATAFGALPARA) form the signal peptide.

The protein belongs to the bacterial solute-binding protein 5 family.

The protein resides in the periplasm. The protein is Putative binding protein BRA0576/BS1330_II0571 of Brucella suis biovar 1 (strain 1330).